A 179-amino-acid polypeptide reads, in one-letter code: Cytochrome c-type biogenesis protein CcmE (179 aa).

Residues 1–8 (MTPRRKSR) are Cytoplasmic-facing. The helical; Signal-anchor for type II membrane protein transmembrane segment at 9 to 29 (MTVILFVLLGISIASALVLYA) threads the bilayer. Residues 30 to 179 (LRQNIDLFYT…QKTSMQEGQK (150 aa)) are Periplasmic-facing. Positions 131 and 135 each coordinate heme. The disordered stretch occupies residues 151–179 (MGVADLKGESERDRQEKAYQKTSMQEGQK). Over residues 156 to 169 (LKGESERDRQEKAY) the composition is skewed to basic and acidic residues. Polar residues predominate over residues 170–179 (QKTSMQEGQK).

The protein belongs to the CcmE/CycJ family.

It is found in the cell inner membrane. In terms of biological role, heme chaperone required for the biogenesis of c-type cytochromes. Transiently binds heme delivered by CcmC and transfers the heme to apo-cytochromes in a process facilitated by CcmF and CcmH. The polypeptide is Cytochrome c-type biogenesis protein CcmE (Pasteurella multocida (strain Pm70)).